Here is a 297-residue protein sequence, read N- to C-terminus: uncharacterized protein (297 aa).

A run of 5 helical transmembrane segments spans residues 114 to 136 (YNRWLVVFMIGLSCAAFAHLSSG), 150 to 170 (LLYDMLFAAIPAVGFALVFNV), 197 to 217 (MPIVFATFFATCVIGFLGVHL), 227 to 247 (AFTVAAIIPMIPGVHAYKAMI), and 269 to 289 (FINTSFILGAIVFGLALPGLL).

Belongs to the ThrE exporter (TC 2.A.79) family.

Its subcellular location is the cell inner membrane. This is an uncharacterized protein from Haemophilus influenzae (strain ATCC 51907 / DSM 11121 / KW20 / Rd).